A 175-amino-acid polypeptide reads, in one-letter code: Probable DNA-directed RNA polymerase subunit delta (175 aa).

Positions 14 to 81 (MALVEIAHEI…SDQTWGLRSW (68 aa)) constitute an HTH HARE-type domain. The interval 110–175 (LDLDEFEEVD…YDDEEEDRKD (66 aa)) is disordered.

The protein belongs to the RpoE family. As to quaternary structure, RNAP is composed of a core of 2 alpha, a beta and a beta' subunits. The core is associated with a delta subunit and one of several sigma factors.

Its function is as follows. Participates in both the initiation and recycling phases of transcription. In the presence of the delta subunit, RNAP displays an increased specificity of transcription, a decreased affinity for nucleic acids, and an increased efficiency of RNA synthesis because of enhanced recycling. This Bacillus velezensis (strain DSM 23117 / BGSC 10A6 / LMG 26770 / FZB42) (Bacillus amyloliquefaciens subsp. plantarum) protein is Probable DNA-directed RNA polymerase subunit delta.